Here is a 602-residue protein sequence, read N- to C-terminus: Cytoskeleton-associated protein 4 (602 aa).

The interval 1-83 (MPSAKQRGSK…GGGGKSSSSS (83 aa)) is disordered. Topologically, residues 1–106 (MPSAKQRGSK…SASCSRRLGR (106 aa)) are cytoplasmic. 3 positions are modified to phosphoserine: S3, S17, and S19. N6-acetyllysine is present on K21. Pro residues predominate over residues 35–52 (KPPPAPQQPPPPPAPHPQ). Positions 53-64 (QHPQQHPQNQAH) are enriched in low complexity. C100 carries the S-palmitoyl cysteine; by ZDHHC2 lipid modification. The helical transmembrane segment at 107 to 127 (ALNFLFYLALVAAAAFSGWCV) threads the bilayer. At 128-602 (HHVLEEVQQV…VKVEKIHEKV (475 aa)) the chain is on the extracellular side. Residues 130-214 (VLEEVQQVRR…QKLQNEILKD (85 aa)) are a coiled coil. S232 carries the phosphoserine; by FAM20C modification. Coiled coils occupy residues 256–460 (TEVQ…GLGS) and 533–602 (LSSL…HEKV). At S312 the chain carries Phosphoserine.

As to quaternary structure, interacts with REEP5. Reversibly palmitoylated. Palmitoylation at Cys-100 by ZDHHC2 is required for its trafficking from the ER to the plasma membrane and for its perinuclear localization. Palmitoylation by ZDHHC2 is also required for its function in APF-mediated antiproliferative signaling. Post-translationally, increased phosphorylation during mitosis prevents binding to microtubules.

It is found in the endoplasmic reticulum membrane. Its subcellular location is the cell membrane. The protein localises to the cytoplasm. The protein resides in the cytoskeleton. It localises to the perinuclear region. Its function is as follows. Mediates the anchoring of the endoplasmic reticulum to microtubules. Functionally, high-affinity epithelial cell surface receptor for the FZD8-related low molecular weight sialoglycopeptide APF/antiproliferative factor. Mediates the APF antiproliferative signaling within cells. The sequence is that of Cytoskeleton-associated protein 4 (CKAP4) from Homo sapiens (Human).